We begin with the raw amino-acid sequence, 123 residues long: Small ribosomal subunit protein uS12 (123 aa).

Position 89 is a 3-methylthioaspartic acid (aspartate 89). Positions 101–123 are disordered; that stretch reads TLDTSGVSDRRQSRSKYGAKRPK. The span at 113–123 shows a compositional bias: basic residues; it reads SRSKYGAKRPK.

The protein belongs to the universal ribosomal protein uS12 family. In terms of assembly, part of the 30S ribosomal subunit. Contacts proteins S8 and S17. May interact with IF1 in the 30S initiation complex.

Its function is as follows. With S4 and S5 plays an important role in translational accuracy. Interacts with and stabilizes bases of the 16S rRNA that are involved in tRNA selection in the A site and with the mRNA backbone. Located at the interface of the 30S and 50S subunits, it traverses the body of the 30S subunit contacting proteins on the other side and probably holding the rRNA structure together. The combined cluster of proteins S8, S12 and S17 appears to hold together the shoulder and platform of the 30S subunit. In Solidesulfovibrio magneticus (strain ATCC 700980 / DSM 13731 / RS-1) (Desulfovibrio magneticus), this protein is Small ribosomal subunit protein uS12.